Consider the following 358-residue polypeptide: 3-dehydroquinate synthase (358 aa).

NAD(+) is bound by residues 70–75 (DGEKFK), 104–108 (GVVGD), 128–129 (TT), Lys141, Lys150, and 168–171 (CLQT). Zn(2+) contacts are provided by Glu183, His246, and His263.

Belongs to the sugar phosphate cyclases superfamily. Dehydroquinate synthase family. It depends on Co(2+) as a cofactor. Zn(2+) is required as a cofactor. NAD(+) serves as cofactor.

It localises to the cytoplasm. The catalysed reaction is 7-phospho-2-dehydro-3-deoxy-D-arabino-heptonate = 3-dehydroquinate + phosphate. It functions in the pathway metabolic intermediate biosynthesis; chorismate biosynthesis; chorismate from D-erythrose 4-phosphate and phosphoenolpyruvate: step 2/7. Catalyzes the conversion of 3-deoxy-D-arabino-heptulosonate 7-phosphate (DAHP) to dehydroquinate (DHQ). This is 3-dehydroquinate synthase from Shewanella frigidimarina (strain NCIMB 400).